We begin with the raw amino-acid sequence, 2409 residues long: Reducing polyketide synthase FUB1 (2409 aa).

Low complexity predominate over residues 1–43; the sequence is MTLSNGSNGANGTSNGHGAHPSANGFHNAANGGANNGTPNGGA. The tract at residues 1–49 is disordered; sequence MTLSNGSNGANGTSNGHGAHPSANGFHNAANGGANNGTPNGGAEYNASL. A Ketosynthase family 3 (KS3) domain is found at 57–479; the sequence is SSAIAVIGVS…GANAHAVLDD (423 aa). Residues Cys230, His365, and His403 each act as for beta-ketoacyl synthase activity in the active site. A malonyl-CoA:ACP transacylase (MAT) domain region spans residues 608–929; that stretch reads TFIFTGQGAQ…FSAIKRKQDA (322 aa). The For malonyltransferase activity role is filled by Ser699. The N-terminal hotdog fold stretch occupies residues 994–1127; the sequence is LELLGVRDPR…GLVSTSYKRE (134 aa). The region spanning 994–1307 is the PKS/mFAS DH domain; it reads LELLGVRDPR…TVPLRGASDP (314 aa). The interval 995-1302 is dehydratase (DH) domain; it reads ELLGVRDPRS…LEGCKTVPLR (308 aa). Residue His1026 is the Proton acceptor; for dehydratase activity of the active site. The tract at residues 1155–1307 is C-terminal hotdog fold; that stretch reads LPSVDPTVFY…TVPLRGASDP (153 aa). The active-site Proton donor; for dehydratase activity is the Asp1220. The tract at residues 1713–2025 is enoyl reductase (ER) domain; the sequence is GLLDTLEYLS…SGGHVGKIVL (313 aa). The segment at 2049–2225 is ketoreductase (KR) domain; that stretch reads ATYVLIGGLG…AATSINLSLV (177 aa). The Carrier domain maps to 2328 to 2405; it reads EVYEIVLQQL…GFAKKVMAKS (78 aa). Ser2365 carries the O-(pantetheine 4'-phosphoryl)serine modification.

Its pathway is mycotoxin biosynthesis. In terms of biological role, reducing polyketide synthase; part of the gene cluster that mediates the biosynthesis of fusaric acid, a mycotoxin with low to moderate toxicity to animals and humans, but with high phytotoxic properties. L-aspartate is suggested as fusaric acid amino acid precursor that is activated and further processed to O-acetyl-L-homoserine by cluster enzymes aspartate kinase FUB3 and homoserine O-acetyltransferase FUB5, as well as enzymes of the primary metabolism. The polyketide synthase (PKS) FUB1 generates the triketide trans-2-hexenal which is presumptively released by the hydrolase FUB4 and linked to the NRPS-bound amino acid precursor by NAD(P)-dependent dehydrogenase FUB6. FUB1, FUB4, and the non-canonical NRPS Fub8 may form an enzyme complex. Further processing of the NRPS-bound intermediate might be carried out by FUB6 and the sulfhydrylase FUB7, enabling a spontaneous electrocyclization to close the carbon backbone of fusaric acid. Dihydrofusaric acid is likely to be released via reduction by the thioester reductase (TR) domain of FUB8 whereupon the final oxidation to fusaric acid may (also) be performed by the FMN-dependent dehydrogenase FUB9. This Gibberella moniliformis (strain M3125 / FGSC 7600) (Maize ear and stalk rot fungus) protein is Reducing polyketide synthase FUB1.